A 61-amino-acid polypeptide reads, in one-letter code: Small ribosomal subunit protein uS14 (61 aa).

Zn(2+)-binding residues include Cys-24, Cys-27, Cys-40, and Cys-43.

The protein belongs to the universal ribosomal protein uS14 family. Zinc-binding uS14 subfamily. In terms of assembly, part of the 30S ribosomal subunit. Contacts proteins S3 and S10. The cofactor is Zn(2+).

Functionally, binds 16S rRNA, required for the assembly of 30S particles and may also be responsible for determining the conformation of the 16S rRNA at the A site. The sequence is that of Small ribosomal subunit protein uS14 from Maridesulfovibrio salexigens (strain ATCC 14822 / DSM 2638 / NCIMB 8403 / VKM B-1763) (Desulfovibrio salexigens).